Here is a 139-residue protein sequence, read N- to C-terminus: Probable disulfide formation protein C 2 (139 aa).

The helical transmembrane segment at 6–25 (KYHIAIAWMIATSAMLISLF) threads the bilayer. A disulfide bridge connects residues C35 and C38. 2 helical membrane-spanning segments follow: residues 40-59 (YQRM…MYRK) and 66-83 (YAFP…YQIT). C95 and C101 are joined by a disulfide. Residues 110–133 (GFISIPMLSFIGFLVIIILIYIES) form a helical membrane-spanning segment.

This sequence belongs to the DsbB family. BdbC subfamily.

The protein resides in the cell membrane. Functionally, required for disulfide bond formation in some proteins. The chain is Probable disulfide formation protein C 2 (bdbC2) from Bacillus cereus (strain ATCC 10987 / NRS 248).